The following is an 85-amino-acid chain: NAD(P)H-quinone oxidoreductase subunit L (85 aa).

Helical transmembrane passes span 17–37 (IVAV…PGFV) and 54–74 (AFMY…SPFL).

This sequence belongs to the complex I NdhL subunit family. NDH-1 can be composed of about 15 different subunits; different subcomplexes with different compositions have been identified which probably have different functions.

The protein localises to the cellular thylakoid membrane. It catalyses the reaction a plastoquinone + NADH + (n+1) H(+)(in) = a plastoquinol + NAD(+) + n H(+)(out). The enzyme catalyses a plastoquinone + NADPH + (n+1) H(+)(in) = a plastoquinol + NADP(+) + n H(+)(out). Functionally, NDH-1 shuttles electrons from an unknown electron donor, via FMN and iron-sulfur (Fe-S) centers, to quinones in the respiratory and/or the photosynthetic chain. The immediate electron acceptor for the enzyme in this species is believed to be plastoquinone. Couples the redox reaction to proton translocation, and thus conserves the redox energy in a proton gradient. Cyanobacterial NDH-1 also plays a role in inorganic carbon-concentration. The protein is NAD(P)H-quinone oxidoreductase subunit L of Crocosphaera subtropica (strain ATCC 51142 / BH68) (Cyanothece sp. (strain ATCC 51142)).